The following is a 521-amino-acid chain: Bifunctional purine biosynthesis protein PurH (521 aa).

Residues 1-145 (MIKQALISVS…KNHRDVTVIV (145 aa)) form the MGS-like domain.

The protein belongs to the PurH family.

The enzyme catalyses (6R)-10-formyltetrahydrofolate + 5-amino-1-(5-phospho-beta-D-ribosyl)imidazole-4-carboxamide = 5-formamido-1-(5-phospho-D-ribosyl)imidazole-4-carboxamide + (6S)-5,6,7,8-tetrahydrofolate. The catalysed reaction is IMP + H2O = 5-formamido-1-(5-phospho-D-ribosyl)imidazole-4-carboxamide. It functions in the pathway purine metabolism; IMP biosynthesis via de novo pathway; 5-formamido-1-(5-phospho-D-ribosyl)imidazole-4-carboxamide from 5-amino-1-(5-phospho-D-ribosyl)imidazole-4-carboxamide (10-formyl THF route): step 1/1. Its pathway is purine metabolism; IMP biosynthesis via de novo pathway; IMP from 5-formamido-1-(5-phospho-D-ribosyl)imidazole-4-carboxamide: step 1/1. The sequence is that of Bifunctional purine biosynthesis protein PurH from Burkholderia multivorans (strain ATCC 17616 / 249).